A 201-amino-acid chain; its full sequence is Large ribosomal subunit protein uL4 (201 aa).

The disordered stretch occupies residues threonine 43–glycine 71.

Belongs to the universal ribosomal protein uL4 family. In terms of assembly, part of the 50S ribosomal subunit.

Its function is as follows. One of the primary rRNA binding proteins, this protein initially binds near the 5'-end of the 23S rRNA. It is important during the early stages of 50S assembly. It makes multiple contacts with different domains of the 23S rRNA in the assembled 50S subunit and ribosome. In terms of biological role, forms part of the polypeptide exit tunnel. In Psychromonas ingrahamii (strain DSM 17664 / CCUG 51855 / 37), this protein is Large ribosomal subunit protein uL4.